A 182-amino-acid chain; its full sequence is ATP synthase subunit delta (182 aa).

Belongs to the ATPase delta chain family. F-type ATPases have 2 components, F(1) - the catalytic core - and F(0) - the membrane proton channel. F(1) has five subunits: alpha(3), beta(3), gamma(1), delta(1), epsilon(1). CF(0) has four main subunits: a(1), b(1), b'(1) and c(10-14). The alpha and beta chains form an alternating ring which encloses part of the gamma chain. F(1) is attached to F(0) by a central stalk formed by the gamma and epsilon chains, while a peripheral stalk is formed by the delta, b and b' chains.

The protein localises to the cellular thylakoid membrane. Its function is as follows. F(1)F(0) ATP synthase produces ATP from ADP in the presence of a proton or sodium gradient. F-type ATPases consist of two structural domains, F(1) containing the extramembraneous catalytic core and F(0) containing the membrane proton channel, linked together by a central stalk and a peripheral stalk. During catalysis, ATP synthesis in the catalytic domain of F(1) is coupled via a rotary mechanism of the central stalk subunits to proton translocation. In terms of biological role, this protein is part of the stalk that links CF(0) to CF(1). It either transmits conformational changes from CF(0) to CF(1) or is implicated in proton conduction. The sequence is that of ATP synthase subunit delta from Prochlorococcus marinus (strain MIT 9303).